The primary structure comprises 119 residues: Large ribosomal subunit protein bL19 (119 aa).

It belongs to the bacterial ribosomal protein bL19 family.

Its function is as follows. This protein is located at the 30S-50S ribosomal subunit interface and may play a role in the structure and function of the aminoacyl-tRNA binding site. This Photobacterium profundum (strain SS9) protein is Large ribosomal subunit protein bL19.